Consider the following 423-residue polypeptide: Divalent metal cation transporter MntH (423 aa).

A run of 11 helical transmembrane segments spans residues 31–51, 58–78, 116–136, 137–157, 168–188, 213–233, 254–274, 302–322, 342–362, 363–383, and 401–421; these read LMML…GNFA, SSFG…AMLI, IIAI…FQLV, FGIS…MILI, VVIG…LFFA, AAGI…SALF, IAMV…AAVF, VLFG…GTMA, FITM…TDIL, VMSQ…LLIF, and YAGV…MVTL.

The protein belongs to the NRAMP family.

The protein resides in the cell inner membrane. Functionally, h(+)-stimulated, divalent metal cation uptake system. In Vibrio campbellii (strain ATCC BAA-1116), this protein is Divalent metal cation transporter MntH.